Consider the following 223-residue polypeptide: Translation initiation factor 6 (223 aa).

The protein belongs to the eIF-6 family.

In terms of biological role, binds to the 50S ribosomal subunit and prevents its association with the 30S ribosomal subunit to form the 70S initiation complex. This chain is Translation initiation factor 6, found in Sulfolobus acidocaldarius (strain ATCC 33909 / DSM 639 / JCM 8929 / NBRC 15157 / NCIMB 11770).